Reading from the N-terminus, the 141-residue chain is Galactose-6-phosphate isomerase subunit LacA 1 (141 aa).

Belongs to the LacAB/RpiB family. In terms of assembly, heteromultimeric protein consisting of LacA and LacB.

It carries out the reaction aldehydo-D-galactose 6-phosphate = keto-D-tagatose 6-phosphate. Its pathway is carbohydrate metabolism; D-galactose 6-phosphate degradation; D-tagatose 6-phosphate from D-galactose 6-phosphate: step 1/1. In Streptococcus pyogenes serotype M18 (strain MGAS8232), this protein is Galactose-6-phosphate isomerase subunit LacA 1.